The primary structure comprises 152 residues: Protein NrdI (152 aa).

Belongs to the NrdI family.

Its function is as follows. Probably involved in ribonucleotide reductase function. The polypeptide is Protein NrdI (Rhodococcus opacus (strain B4)).